Here is a 334-residue protein sequence, read N- to C-terminus: MIEADRLIQPQLQGQDDVIDRAMRPKLLDEYTGQDDTRAQLKVFIQAAKNREEALDHMLIYGPPGLGKTTLAMIVANEMGVNIKSTSGPVLEKAGDLAALLTNLEAGDVLFIDEIHRLSPVVEEILYPAMEDYQLDIMIGEGPAARSIKLDLPPFTLVGATTRAGALTSPLRARFGIPLRLEFYNVKDLSTIVSRSAQVMGLAIDSEGAIEIAKRSRGTPRIANRLLRRVRDYAEVKHDGAVTKKVAEHALDLLDVDGEGFDYMDRKLLLAIIDKFMGGPVGLDNLAAAIGEERETIEDVLEPFLIQQGFIQRTPRGRIATNRAYLHFGMIKPE.

The tract at residues 4–184 is large ATPase domain (RuvB-L); that stretch reads ADRLIQPQLQ…FGIPLRLEFY (181 aa). Residues R24, G65, K68, T69, T70, 131–133, R174, Y184, and R221 each bind ATP; that span reads EDY. A Mg(2+)-binding site is contributed by T69. The segment at 185–255 is small ATPAse domain (RuvB-S); the sequence is NVKDLSTIVS…VAEHALDLLD (71 aa). Positions 258–334 are head domain (RuvB-H); the sequence is GEGFDYMDRK…YLHFGMIKPE (77 aa). DNA is bound by residues R294, R313, and R318.

The protein belongs to the RuvB family. As to quaternary structure, homohexamer. Forms an RuvA(8)-RuvB(12)-Holliday junction (HJ) complex. HJ DNA is sandwiched between 2 RuvA tetramers; dsDNA enters through RuvA and exits via RuvB. An RuvB hexamer assembles on each DNA strand where it exits the tetramer. Each RuvB hexamer is contacted by two RuvA subunits (via domain III) on 2 adjacent RuvB subunits; this complex drives branch migration. In the full resolvosome a probable DNA-RuvA(4)-RuvB(12)-RuvC(2) complex forms which resolves the HJ.

It is found in the cytoplasm. The catalysed reaction is ATP + H2O = ADP + phosphate + H(+). Its function is as follows. The RuvA-RuvB-RuvC complex processes Holliday junction (HJ) DNA during genetic recombination and DNA repair, while the RuvA-RuvB complex plays an important role in the rescue of blocked DNA replication forks via replication fork reversal (RFR). RuvA specifically binds to HJ cruciform DNA, conferring on it an open structure. The RuvB hexamer acts as an ATP-dependent pump, pulling dsDNA into and through the RuvAB complex. RuvB forms 2 homohexamers on either side of HJ DNA bound by 1 or 2 RuvA tetramers; 4 subunits per hexamer contact DNA at a time. Coordinated motions by a converter formed by DNA-disengaged RuvB subunits stimulates ATP hydrolysis and nucleotide exchange. Immobilization of the converter enables RuvB to convert the ATP-contained energy into a lever motion, pulling 2 nucleotides of DNA out of the RuvA tetramer per ATP hydrolyzed, thus driving DNA branch migration. The RuvB motors rotate together with the DNA substrate, which together with the progressing nucleotide cycle form the mechanistic basis for DNA recombination by continuous HJ branch migration. Branch migration allows RuvC to scan DNA until it finds its consensus sequence, where it cleaves and resolves cruciform DNA. This is Holliday junction branch migration complex subunit RuvB from Shewanella sp. (strain MR-7).